Reading from the N-terminus, the 139-residue chain is Protein AC53 (139 aa).

The protein resides in the host cytoplasm. It localises to the host nucleus. Its function is as follows. Plays a role in nucleocapsid assembly. This chain is Protein AC53 (AC53), found in Lepidoptera (butterflies and moths).